The sequence spans 400 residues: MALVTQARTLGKYFLLLDNMLVVLGFFVVFPLISIRFVEQLGWAGVIVGFALGLRQLVQQGLGIFGGAIADRFGAKPMIITGMLLRALGFALMALADKPWILWLSCILSALGGTLFDPPRTALVIKLTRPYERGRFYSLLLMQDSAGAVIGALIGSWLLLYDFHLVCWVGAGIFVLAAIFNAWLLPAYRISTTRTPIKEGLKRVILDKRFVQYVLTLTGYFVLSVQVMLMFPIVVNEIAGTPSAVKWMYAIEALLSLTLLYPIARWSEKHFRLEQRLMAGLFLMSISMFPVGITHSLHAIFLIITLFYLGTITAEPARETLSASLADPRARGSYMGFSRLGLAFGGAIGYTGGGWMYDIGKQLELPELPWFLLGSIGFITLYALHRQFNRKKIETAMLTP.

10 consecutive transmembrane segments (helical) span residues 13–33, 34–54, 99–116, 139–159, 165–185, 214–234, 244–264, 289–309, 340–360, and 365–385; these read YFLLLDNMLVVLGFFVVFPLI, SIRFVEQLGWAGVIVGFALGL, PWILWLSCILSALGGTLF, LLLMQDSAGAVIGALIGSWLL, LVCWVGAGIFVLAAIFNAWLL, VLTLTGYFVLSVQVMLMFPIV, AVKWMYAIEALLSLTLLYPIA, FPVGITHSLHAIFLIITLFYL, LGLAFGGAIGYTGGGWMYDIG, and LPELPWFLLGSIGFITLYALH.

Belongs to the major facilitator superfamily. DHA1 family. MdtH (TC 2.A.1.2.21) subfamily.

The protein localises to the cell inner membrane. This Proteus mirabilis (strain HI4320) protein is Multidrug resistance protein MdtH.